A 109-amino-acid chain; its full sequence is Ribulose bisphosphate carboxylase small subunit (109 aa).

The protein belongs to the RuBisCO small chain family. Heterohexadecamer of 8 large and 8 small subunits.

Its subcellular location is the carboxysome. Functionally, ruBisCO catalyzes two reactions: the carboxylation of D-ribulose 1,5-bisphosphate, the primary event in carbon dioxide fixation, as well as the oxidative fragmentation of the pentose substrate in the photorespiration process. Both reactions occur simultaneously and in competition at the same active site. Although the small subunit is not catalytic it is essential for maximal activity. In Prochlorothrix hollandica, this protein is Ribulose bisphosphate carboxylase small subunit.